We begin with the raw amino-acid sequence, 696 residues long: DNA ligase (696 aa).

NAD(+) contacts are provided by residues 43-47 (DGEFD), 92-93 (SL), and glutamate 122. Lysine 124 acts as the N6-AMP-lysine intermediate in catalysis. Arginine 145, glutamate 185, lysine 301, and lysine 325 together coordinate NAD(+). Positions 419, 422, 438, and 444 each coordinate Zn(2+). Positions 608–696 (SIPRNLEGLS…GPDAVAESGV (89 aa)) constitute a BRCT domain.

This sequence belongs to the NAD-dependent DNA ligase family. LigA subfamily. It depends on Mg(2+) as a cofactor. Mn(2+) is required as a cofactor.

The enzyme catalyses NAD(+) + (deoxyribonucleotide)n-3'-hydroxyl + 5'-phospho-(deoxyribonucleotide)m = (deoxyribonucleotide)n+m + AMP + beta-nicotinamide D-nucleotide.. Its function is as follows. DNA ligase that catalyzes the formation of phosphodiester linkages between 5'-phosphoryl and 3'-hydroxyl groups in double-stranded DNA using NAD as a coenzyme and as the energy source for the reaction. It is essential for DNA replication and repair of damaged DNA. The chain is DNA ligase from Rhodococcus jostii (strain RHA1).